The primary structure comprises 240 residues: Lactate utilization protein C (240 aa).

This sequence belongs to the LutC/YkgG family.

In terms of biological role, is involved in L-lactate degradation and allows cells to grow with lactate as the sole carbon source. The protein is Lactate utilization protein C of Bacillus licheniformis (strain ATCC 14580 / DSM 13 / JCM 2505 / CCUG 7422 / NBRC 12200 / NCIMB 9375 / NCTC 10341 / NRRL NRS-1264 / Gibson 46).